We begin with the raw amino-acid sequence, 882 residues long: DNA mismatch repair protein MutS (882 aa).

Residue 627–634 (GPNMAGKS) coordinates ATP.

This sequence belongs to the DNA mismatch repair MutS family.

Functionally, this protein is involved in the repair of mismatches in DNA. It is possible that it carries out the mismatch recognition step. This protein has a weak ATPase activity. This chain is DNA mismatch repair protein MutS, found in Anaeromyxobacter dehalogenans (strain 2CP-1 / ATCC BAA-258).